Reading from the N-terminus, the 368-residue chain is Putative phospho-2-dehydro-3-deoxyheptonate aldolase (368 aa).

This sequence belongs to the class-I DAHP synthase family.

It carries out the reaction D-erythrose 4-phosphate + phosphoenolpyruvate + H2O = 7-phospho-2-dehydro-3-deoxy-D-arabino-heptonate + phosphate. It functions in the pathway metabolic intermediate biosynthesis; chorismate biosynthesis; chorismate from D-erythrose 4-phosphate and phosphoenolpyruvate: step 1/7. Its function is as follows. Stereospecific condensation of phosphoenolpyruvate (PEP) and D-erythrose-4-phosphate (E4P) giving rise to 3-deoxy-D-arabino-heptulosonate-7-phosphate (DAHP). In Schizosaccharomyces pombe (strain 972 / ATCC 24843) (Fission yeast), this protein is Putative phospho-2-dehydro-3-deoxyheptonate aldolase.